The sequence spans 629 residues: (-)-alpha pinene synthase 1, chloroplastic (629 aa).

The N-terminal 48 residues, Met-1 to Arg-48, are a transit peptide targeting the chloroplast. Residues Asp-380, Asp-384, and Asp-532 each contribute to the Mg(2+) site. The DDXXD motif signature appears at Asp-380 to Asp-384.

The protein belongs to the terpene synthase family. Tpsd subfamily. It depends on Mg(2+) as a cofactor. Mn(2+) serves as cofactor.

It localises to the plastid. Its subcellular location is the chloroplast. It carries out the reaction (2E)-geranyl diphosphate = (1S,5S)-alpha-pinene + diphosphate. The catalysed reaction is (2E)-geranyl diphosphate = (1S,5S)-beta-pinene + diphosphate. It participates in terpene metabolism; oleoresin biosynthesis. It functions in the pathway secondary metabolite biosynthesis; terpenoid biosynthesis. Functionally, monoterpene synthase (TPS) involved in the biosynthesis of monoterpene natural products included in conifer oleoresin secretions and volatile emissions; these compounds contribute to biotic and abiotic stress defense against herbivores and pathogens. Catalyzes the conversion of (2E)-geranyl diphosphate (GPP) to (-)-alpha-pinene and, to a lower extent, to (-)-beta-pinene. The chain is (-)-alpha pinene synthase 1, chloroplastic from Pinus contorta (Shore pine).